Reading from the N-terminus, the 155-residue chain is uncharacterized protein (155 aa).

The signal sequence occupies residues methionine 1 to alanine 23. An intrachain disulfide couples cysteine 86 to cysteine 91.

This sequence belongs to the ivy family.

The protein localises to the periplasm. This is an uncharacterized protein from Pseudomonas aeruginosa (strain ATCC 15692 / DSM 22644 / CIP 104116 / JCM 14847 / LMG 12228 / 1C / PRS 101 / PAO1).